Consider the following 122-residue polypeptide: Large ribosomal subunit protein uL18 (122 aa).

This sequence belongs to the universal ribosomal protein uL18 family. Part of the 50S ribosomal subunit; part of the 5S rRNA/L5/L18/L25 subcomplex. Contacts the 5S and 23S rRNAs.

Functionally, this is one of the proteins that bind and probably mediate the attachment of the 5S RNA into the large ribosomal subunit, where it forms part of the central protuberance. In Prochlorococcus marinus (strain AS9601), this protein is Large ribosomal subunit protein uL18.